Here is a 418-residue protein sequence, read N- to C-terminus: Serine--tRNA ligase (418 aa).

T226–E228 contributes to the L-serine binding site. ATP-binding positions include R257–E259 and V273. Residue E280 coordinates L-serine. E344–S347 is an ATP binding site. T379 serves as a coordination point for L-serine.

Belongs to the class-II aminoacyl-tRNA synthetase family. Type-1 seryl-tRNA synthetase subfamily. Homodimer. The tRNA molecule binds across the dimer.

Its subcellular location is the cytoplasm. It carries out the reaction tRNA(Ser) + L-serine + ATP = L-seryl-tRNA(Ser) + AMP + diphosphate + H(+). The enzyme catalyses tRNA(Sec) + L-serine + ATP = L-seryl-tRNA(Sec) + AMP + diphosphate + H(+). The protein operates within aminoacyl-tRNA biosynthesis; selenocysteinyl-tRNA(Sec) biosynthesis; L-seryl-tRNA(Sec) from L-serine and tRNA(Sec): step 1/1. Functionally, catalyzes the attachment of serine to tRNA(Ser). Is also able to aminoacylate tRNA(Sec) with serine, to form the misacylated tRNA L-seryl-tRNA(Sec), which will be further converted into selenocysteinyl-tRNA(Sec). In Mycobacteroides abscessus (strain ATCC 19977 / DSM 44196 / CCUG 20993 / CIP 104536 / JCM 13569 / NCTC 13031 / TMC 1543 / L948) (Mycobacterium abscessus), this protein is Serine--tRNA ligase.